Reading from the N-terminus, the 466-residue chain is Peptidoglycan-N-acetylglucosamine deacetylase PgdA (466 aa).

At 1–5 (MKIRW) the chain is on the cytoplasmic side. A helical membrane pass occupies residues 6-26 (IRLSLVAILIIAVVFIGVIGF). Residues 27–466 (QKYQFSKSRN…FDKTDSRMVK (440 aa)) are Extracellular-facing. In terms of domain architecture, NodB homology spans 266 to 440 (KRIALTFDDG…KLKSQGYEFV (175 aa)). D273 serves as the catalytic Proton acceptor. Zn(2+)-binding residues include D274, H324, and H328. Residue Y365 coordinates substrate. The Proton donor role is filled by H415.

As to quaternary structure, homodimer. Interacts (via transmembrane domain) with PbpA1 (via transmembrane domain); the interaction is important for the peptidoglycan N-deacetylase function of this protein. Zn(2+) serves as cofactor.

The protein localises to the cell membrane. It localises to the secreted. The protein resides in the cell wall. The enzyme catalyses peptidoglycan-N-acetyl-D-glucosamine + H2O = peptidoglycan-D-glucosamine + acetate.. Its function is as follows. Catalyzes the deacetylation of N-acetylglucosamine (GlcNAc) residues in peptidoglycan (PG). Also deacetylates N-acetylated PG. Does not deacetylate N-acetylmuramic acid. Confers host lysozyme resistance. Critical for virulence and escape from innate immune response of the host. Required for intracellular survival of bacteria in macrophages of the host. Required for successful host colonization. Controls the production of inflammatory mediators in the bone marrow derived macrophages (BMMs) of the infected mouse. Suppresses Toll-like receptor 2 (TLR2)-dependent secretion of interleukin 6 (IL-6) and interferon-beta (IFN-beta) in the macrophages of the infected mouse. May decrease accessibility of pattern recognition receptors (PRRs) such as nucleotide-binding oligomerization domain protein (NOD) 1 of the host to the bacterial cell wall components. Protects cells from autolysis induced by lysozyme or by other autolysis-inducing agents. The polypeptide is Peptidoglycan-N-acetylglucosamine deacetylase PgdA (Listeria monocytogenes serotype 1/2a (strain 10403S)).